The primary structure comprises 285 residues: Probable endonuclease 4 (285 aa).

The Zn(2+) site is built by histidine 69, histidine 109, glutamate 145, aspartate 179, histidine 182, histidine 216, aspartate 229, histidine 231, and glutamate 261.

It belongs to the AP endonuclease 2 family. The cofactor is Zn(2+).

The catalysed reaction is Endonucleolytic cleavage to 5'-phosphooligonucleotide end-products.. Functionally, endonuclease IV plays a role in DNA repair. It cleaves phosphodiester bonds at apurinic or apyrimidinic (AP) sites, generating a 3'-hydroxyl group and a 5'-terminal sugar phosphate. This chain is Probable endonuclease 4, found in Escherichia coli O127:H6 (strain E2348/69 / EPEC).